The sequence spans 276 residues: NH(3)-dependent NAD(+) synthetase (276 aa).

Residue 43 to 50 (GISGGVDS) participates in ATP binding. A Mg(2+)-binding site is contributed by Asp49. Arg146 is a deamido-NAD(+) binding site. Thr166 serves as a coordination point for ATP. Glu171 is a Mg(2+) binding site. Residues Lys179 and Asp186 each contribute to the deamido-NAD(+) site. Residues Lys195 and Thr217 each coordinate ATP. 266–267 (HK) is a binding site for deamido-NAD(+).

It belongs to the NAD synthetase family. As to quaternary structure, homodimer.

The catalysed reaction is deamido-NAD(+) + NH4(+) + ATP = AMP + diphosphate + NAD(+) + H(+). It functions in the pathway cofactor biosynthesis; NAD(+) biosynthesis; NAD(+) from deamido-NAD(+) (ammonia route): step 1/1. Functionally, catalyzes the ATP-dependent amidation of deamido-NAD to form NAD. Uses ammonia as a nitrogen source. The protein is NH(3)-dependent NAD(+) synthetase of Shewanella piezotolerans (strain WP3 / JCM 13877).